Here is a 33-residue protein sequence, read N- to C-terminus: Pardaxin P-1 (33 aa).

The protein belongs to the pardaxin family. In terms of assembly, in aqueous solution exists as a tetramer.

It localises to the secreted. Its subcellular location is the target cell membrane. Its function is as follows. Exhibits unusual shark repellent and surfactant properties. Forms voltage-dependent, ion-permeable channels in membranes. At high concentration causes cell membrane lysis. Causes death in killfish oryzias latipes in 30 minutes at a concentration of 25 micrograms/ml. This Pardachirus pavoninus (Peacock sole) protein is Pardaxin P-1.